The sequence spans 599 residues: Histone-arginine methyltransferase CARMER (599 aa).

The 308-residue stretch at Ala127–Asp434 folds into the SAM-dependent MTase PRMT-type domain. S-adenosyl-L-methionine-binding residues include Gln140, Arg149, Gly173, Glu195, Glu224, and Thr252. Residue Arg487 is modified to Asymmetric dimethylarginine; by autocatalysis.

It belongs to the class I-like SAM-binding methyltransferase superfamily. Protein arginine N-methyltransferase family. Homodimer. In terms of processing, the dimethylated protein is the major form.

The protein localises to the cytoplasm. It is found in the nucleus. It catalyses the reaction L-arginyl-[protein] + 2 S-adenosyl-L-methionine = N(omega),N(omega)-dimethyl-L-arginyl-[protein] + 2 S-adenosyl-L-homocysteine + 2 H(+). In terms of biological role, methylates (mono- and asymmetric dimethylation) the guanidino nitrogens of arginyl residues in proteins. May methylate histone H3 at 'Arg-17' and activate transcription via chromatin remodeling. This chain is Histone-arginine methyltransferase CARMER (Art4), found in Culex quinquefasciatus (Southern house mosquito).